The chain runs to 91 residues: MPLHKSAEKRLRQSDRKNARNRARKKELKVLVKNMQKLVDAGAPKPEVEVAYRSAVQKLDRLGVKNYIHANKASRKKSQLARILNEYGKAE.

Basic and acidic residues predominate over residues 1 to 18 (MPLHKSAEKRLRQSDRKN). The segment at 1–25 (MPLHKSAEKRLRQSDRKNARNRARK) is disordered.

The protein belongs to the bacterial ribosomal protein bS20 family.

Functionally, binds directly to 16S ribosomal RNA. The sequence is that of Small ribosomal subunit protein bS20 from Chlorobium phaeovibrioides (strain DSM 265 / 1930) (Prosthecochloris vibrioformis (strain DSM 265)).